The primary structure comprises 345 residues: Probable aldo-keto reductase 3 (345 aa).

Tyr63 serves as the catalytic Proton donor. His130 contacts substrate. 209-219 is a binding site for NADP(+); sequence SPLGRGFFASG.

It belongs to the aldo/keto reductase family.

In Arabidopsis thaliana (Mouse-ear cress), this protein is Probable aldo-keto reductase 3.